Consider the following 1041-residue polypeptide: Isoleucine--tRNA ligase (1041 aa).

A 'HIGH' region motif is present at residues 53–63; sequence PFANGLPHYGH. The short motif at 619 to 623 is the 'KMSKS' region element; it reads KMSKS. ATP is bound at residue Lys-622.

This sequence belongs to the class-I aminoacyl-tRNA synthetase family. IleS type 2 subfamily. Monomer. The cofactor is Zn(2+).

The protein localises to the cytoplasm. It carries out the reaction tRNA(Ile) + L-isoleucine + ATP = L-isoleucyl-tRNA(Ile) + AMP + diphosphate. Functionally, catalyzes the attachment of isoleucine to tRNA(Ile). As IleRS can inadvertently accommodate and process structurally similar amino acids such as valine, to avoid such errors it has two additional distinct tRNA(Ile)-dependent editing activities. One activity is designated as 'pretransfer' editing and involves the hydrolysis of activated Val-AMP. The other activity is designated 'posttransfer' editing and involves deacylation of mischarged Val-tRNA(Ile). The polypeptide is Isoleucine--tRNA ligase (Mycobacterium bovis (strain ATCC BAA-935 / AF2122/97)).